Here is a 349-residue protein sequence, read N- to C-terminus: Ferredoxin--NADP reductase 1 (349 aa).

The FAD site is built by Glu36, Lys44, Tyr48, Ile88, Leu123, Asp290, and Ser331.

This sequence belongs to the ferredoxin--NADP reductase type 2 family. Homodimer. FAD is required as a cofactor.

The catalysed reaction is 2 reduced [2Fe-2S]-[ferredoxin] + NADP(+) + H(+) = 2 oxidized [2Fe-2S]-[ferredoxin] + NADPH. The protein is Ferredoxin--NADP reductase 1 of Bacillus mycoides (strain KBAB4) (Bacillus weihenstephanensis).